A 343-amino-acid polypeptide reads, in one-letter code: Protein RecA (343 aa).

64-71 (GPESSGKT) is a binding site for ATP.

This sequence belongs to the RecA family.

The protein localises to the cytoplasm. In terms of biological role, can catalyze the hydrolysis of ATP in the presence of single-stranded DNA, the ATP-dependent uptake of single-stranded DNA by duplex DNA, and the ATP-dependent hybridization of homologous single-stranded DNAs. It interacts with LexA causing its activation and leading to its autocatalytic cleavage. The polypeptide is Protein RecA (Bacillus mycoides (strain KBAB4) (Bacillus weihenstephanensis)).